Consider the following 705-residue polypeptide: UvrABC system protein C (705 aa).

One can recognise a GIY-YIG domain in the interval 16-95; that stretch reads ETPGVYRFRD…IKQFDPRFNV (80 aa). Residues 208–243 form the UVR domain; that stretch reads GRYLRRLEREMQQAAQAQEYERAARLRDDIGALRRA. Low complexity predominate over residues 315 to 332; sequence AASTGTAGSTVPTTTAGS. 2 disordered regions span residues 315–335 and 683–705; these read AAST…SQGE and RADA…ETVS.

This sequence belongs to the UvrC family. In terms of assembly, interacts with UvrB in an incision complex.

The protein localises to the cytoplasm. The UvrABC repair system catalyzes the recognition and processing of DNA lesions. UvrC both incises the 5' and 3' sides of the lesion. The N-terminal half is responsible for the 3' incision and the C-terminal half is responsible for the 5' incision. The protein is UvrABC system protein C of Frankia casuarinae (strain DSM 45818 / CECT 9043 / HFP020203 / CcI3).